The sequence spans 423 residues: G-protein coupled receptor 83 (423 aa).

Residues 1–17 (MKVPPVLLLFLLSSVRA) form the signal peptide. Residues 18 to 71 (TEQPQVVTEHPSMEAALTGPNASSHFWANYTFSDWQNFVGRRRYGAESQNPTVK) lie on the Extracellular side of the membrane. 2 N-linked (GlcNAc...) asparagine glycosylation sites follow: Asn38 and Asn46. A helical membrane pass occupies residues 72–92 (ALLIVAYSFTIVFSLFGNVLV). At 93 to 107 (CHVIFKNQRMHSATS) the chain is on the cytoplasmic side. The helical transmembrane segment at 108-129 (LFIVNLAVADIMITLLNTPFTL) threads the bilayer. Over 130-145 (VRFVNSTWVFGKGMCH) the chain is Extracellular. N-linked (GlcNAc...) asparagine glycosylation occurs at Asn134. Cys144 and Cys224 are joined by a disulfide. A helical membrane pass occupies residues 146-167 (VSRFAQYCSLHVSALTLTAIAV). At 168–186 (DRHQVIMHPLKPRISITKG) the chain is on the cytoplasmic side. Residues 187–208 (VIYIAVIWVMATFFSLPHAICQ) traverse the membrane as a helical segment. Over 209–238 (KLFTFKYSEDIVRSLCLPDFPEPADLFWKY) the chain is Extracellular. Residues 239–260 (LDLATFILLYLLPLFIISVAYA) traverse the membrane as a helical segment. At 261–293 (RVAKKLWLCNTIGDVTTEQYLALRRKKKTTVKM) the chain is on the cytoplasmic side. A helical membrane pass occupies residues 294–315 (LVLVVVLFALCWFPLNCYVLLL). Residues 316-327 (SSKAIHTNNALY) are Extracellular-facing. A helical transmembrane segment spans residues 328–348 (FAFHWFAMSSTCYNPFIYCWL). At 349-423 (NENFRVELKA…SSVEPVVAMS (75 aa)) the chain is on the cytoplasmic side. The interval 389 to 423 (SHGRRAPLPNHHLPSSQIQSGKTDLSSVEPVVAMS) is disordered. Residues 401–414 (LPSSQIQSGKTDLS) show a composition bias toward polar residues.

Belongs to the G-protein coupled receptor 1 family. As to expression, predominantly expressed in the brain, with moderate expression in the hypothalamus. Expressed in the thymus.

It localises to the cell membrane. Its function is as follows. G-protein coupled receptor for PEN, a neuropeptide produced from the precursor protein, proSAAS (encoded by PCSK1N). Acts through a G(i)- and G(q)-alpha-alpha-mediated pathway in response to PEN. Plays a role in food intake and body weight regulation. May contribute to the regulation of anxiety-related behaviors. In Mus musculus (Mouse), this protein is G-protein coupled receptor 83.